Consider the following 295-residue polypeptide: Cyclin-G1 (295 aa).

Belongs to the cyclin family. Cyclin G subfamily.

It is found in the nucleus. May play a role in growth regulation. Is associated with G2/M phase arrest in response to DNA damage. May be an intermediate by which p53 mediates its role as an inhibitor of cellular proliferation. The polypeptide is Cyclin-G1 (CCNG1) (Sus scrofa (Pig)).